The chain runs to 184 residues: MSLWGVYTGPQPPKKPLQEMTQEEQAEEGARQMIGFMNSCPGKTVMAGVSGFALGGFFGLFMASMAYDTPIGTDAVKHISELPFKQQMKLQFTDMAKRSYSSAKNFGYIGMVYSGVECTIESLRAKHDIYNGVSAGCITGAGLAIRAGPQAALVGCAGFAAFSLAIDMYLNSDAAPPPKNDYDI.

The interval 1–26 (MSLWGVYTGPQPPKKPLQEMTQEEQA) is disordered. 2 cysteine pairs are disulfide-bonded: Cys-40/Cys-118 and Cys-137/Cys-156. 2 helical membrane-spanning segments follow: residues 45 to 65 (VMAGVSGFALGGFFGLFMASM) and 151 to 171 (AALVGCAGFAAFSLAIDMYLN).

Belongs to the Tim17/Tim22/Tim23 family. Component of the TIM22 complex, whose core is composed of TIM22 and TIM54, associated with the 70 kDa heterohexamer composed of TIM9 and TIM10 (or TIM8 and TIM13).

It localises to the mitochondrion inner membrane. Its function is as follows. Essential core component of the TIM22 complex, a complex that mediates the import and insertion of multi-pass transmembrane proteins into the mitochondrial inner membrane. In the TIM22 complex, it constitutes the voltage-activated and signal-gated channel. Forms a twin-pore translocase that uses the membrane potential as external driving force in 2 voltage-dependent steps. This is Mitochondrial import inner membrane translocase subunit TIM22 from Candida albicans (strain SC5314 / ATCC MYA-2876) (Yeast).